Here is a 133-residue protein sequence, read N- to C-terminus: Holo-[acyl-carrier-protein] synthase (133 aa).

Residues Asp-8 and Glu-57 each contribute to the Mg(2+) site.

The protein belongs to the P-Pant transferase superfamily. AcpS family. Mg(2+) serves as cofactor.

Its subcellular location is the cytoplasm. It catalyses the reaction apo-[ACP] + CoA = holo-[ACP] + adenosine 3',5'-bisphosphate + H(+). Transfers the 4'-phosphopantetheine moiety from coenzyme A to a Ser of acyl-carrier-protein. This Bartonella tribocorum (strain CIP 105476 / IBS 506) protein is Holo-[acyl-carrier-protein] synthase.